Here is an 86-residue protein sequence, read N- to C-terminus: SEED MATURATION PROTEIN 1 (86 aa).

Residues 52–86 form a disordered region; that stretch reads RIEKGKEQSAASGDQTQIQRDIKDIKGTRTDDSPR. Over residues 60-70 the composition is skewed to polar residues; the sequence is SAASGDQTQIQ. The span at 71–86 shows a compositional bias: basic and acidic residues; the sequence is RDIKDIKGTRTDDSPR.

The protein belongs to the LEA type 3 family.

Protein chaperone involved in seed maturation and dormancy maintenance after high temperature fluctuation (e.g. secondary dormancy after 3 days at 40 degrees Celsius), probably by protecting heat labile proteins required for secondary dormancy (e.g. G6PDH, HOP3, SR45, ECP63, SCL33, RPL32B, ChlADR1, MSBP1, MBF1B, At3g01690, At1g15280, At1g15290, At2g31410, At1g11630, At1g65090, EMB2279, EMB1674 and RPL35C). The protein is SEED MATURATION PROTEIN 1 of Arabidopsis thaliana (Mouse-ear cress).